Reading from the N-terminus, the 66-residue chain is Small vasohibin-binding protein (66 aa).

Residues 1–23 (MDPPARKEKPKVKEPVSRIEKAK) show a composition bias toward basic and acidic residues. A disordered region spans residues 1-32 (MDPPARKEKPKVKEPVSRIEKAKQKSAQQELK). A coiled-coil region spans residues 5 to 52 (ARKEKPKVKEPVSRIEKAKQKSAQQELKQRQRAEIYALNRVMTELEQQ).

The protein belongs to the SVBP family. In terms of assembly, interacts with VASH1 and VASH2.

The protein resides in the cytoplasm. The protein localises to the secreted. It localises to the cytoskeleton. Functionally, enhances the tyrosine carboxypeptidase activity of VASH1 and VASH2, thereby promoting the removal of the C-terminal tyrosine residue of alpha-tubulin. Also required to enhance the solubility and secretion of VASH1 and VASH2. Plays a role in axon and excitatory synapse formation. This is Small vasohibin-binding protein from Bos taurus (Bovine).